The following is a 143-amino-acid chain: Putative pre-16S rRNA nuclease (143 aa).

The protein belongs to the YqgF nuclease family.

The protein resides in the cytoplasm. Its function is as follows. Could be a nuclease involved in processing of the 5'-end of pre-16S rRNA. The protein is Putative pre-16S rRNA nuclease of Lactococcus lactis subsp. cremoris (strain SK11).